A 326-amino-acid polypeptide reads, in one-letter code: Tagatose 1,6-diphosphate aldolase (326 aa).

The protein belongs to the aldolase LacD family.

It carries out the reaction D-tagatofuranose 1,6-bisphosphate = D-glyceraldehyde 3-phosphate + dihydroxyacetone phosphate. The protein operates within carbohydrate metabolism; D-tagatose 6-phosphate degradation; D-glyceraldehyde 3-phosphate and glycerone phosphate from D-tagatose 6-phosphate: step 2/2. This is Tagatose 1,6-diphosphate aldolase from Staphylococcus aureus (strain MSSA476).